The sequence spans 276 residues: Probable endonuclease 4 (276 aa).

Histidine 70, histidine 108, glutamate 143, aspartate 176, histidine 179, histidine 210, aspartate 223, histidine 225, and glutamate 255 together coordinate Zn(2+).

It belongs to the AP endonuclease 2 family. Requires Zn(2+) as cofactor.

It carries out the reaction Endonucleolytic cleavage to 5'-phosphooligonucleotide end-products.. Functionally, endonuclease IV plays a role in DNA repair. It cleaves phosphodiester bonds at apurinic or apyrimidinic (AP) sites, generating a 3'-hydroxyl group and a 5'-terminal sugar phosphate. In Mesomycoplasma hyopneumoniae (strain J / ATCC 25934 / NCTC 10110) (Mycoplasma hyopneumoniae), this protein is Probable endonuclease 4.